Consider the following 135-residue polypeptide: Small ribosomal subunit protein uS9 (135 aa).

The interval 96-135 (SADNRKPLKTEGHLSRDPRAKERRKYGLKKARKAPQFSKR) is disordered. Over residues 97–115 (ADNRKPLKTEGHLSRDPRA) the composition is skewed to basic and acidic residues. Residues 116-135 (KERRKYGLKKARKAPQFSKR) are compositionally biased toward basic residues.

This sequence belongs to the universal ribosomal protein uS9 family.

This is Small ribosomal subunit protein uS9 from Prochlorococcus marinus (strain MIT 9313).